The following is a 1386-amino-acid chain: X-linked retinitis pigmentosa GTPase regulator homolog (1386 aa).

Disordered stretches follow at residues 1–25 (MFFK…TSSE), 37–56 (AGAR…KARR), and 730–760 (MPQM…PEQH). The segment covering 9 to 25 (SRKTSANSSSDTSTSSE) has biased composition (low complexity). Basic residues predominate over residues 45 to 56 (SVHRQSGKKARR). 4 RCC1 repeats span residues 737-787 (SKRS…VLSS), 788-838 (SGQL…FICS), 839-891 (DGSL…VLTD), and 893-943 (GRVL…CITE). Positions 972–994 (LKNTEDPSSPSPSTNGSTPRVNL) are disordered. RCC1 repeat units follow at residues 1034-1085 (EGTL…ASTD) and 1087-1139 (GSVF…FVQK).

Functionally, could be a guanine-nucleotide releasing factor for glo-1. May play a role in gut granule biogenesis. Regulates axon termination in PLM and ALM neurons. This is X-linked retinitis pigmentosa GTPase regulator homolog (glo-4) from Caenorhabditis elegans.